Here is a 328-residue protein sequence, read N- to C-terminus: Cytochrome c biogenesis protein CcsA (328 aa).

Transmembrane regions (helical) follow at residues 13-33 (ISFS…LVNL), 46-66 (GIII…IFSG), 73-93 (LYES…ISFF), 101-121 (LNAI…SGLL), 146-166 (MVLG…LLVI), 234-254 (IISL…VWAN), 263-283 (WDPK…YLHI), and 295-315 (AIVA…VNLL).

It belongs to the CcmF/CycK/Ccl1/NrfE/CcsA family. May interact with Ccs1.

It is found in the plastid. The protein localises to the chloroplast thylakoid membrane. In terms of biological role, required during biogenesis of c-type cytochromes (cytochrome c6 and cytochrome f) at the step of heme attachment. The polypeptide is Cytochrome c biogenesis protein CcsA (Aethionema grandiflorum (Persian stone-cress)).